The following is a 439-amino-acid chain: Protease Do-like 1, chloroplastic (439 aa).

The interval 154-323 is serine protease; sequence QGSGSGFVWD…IPVDTVGGIV (170 aa). Residues histidine 173, aspartate 203, and serine 282 each act as charge relay system in the active site. The PDZ domain maps to 326-423; sequence LVRFGKVTRP…EVTVEVLRGD (98 aa).

Belongs to the peptidase S1C family. Interacts with PTAC16 and other potential targets for degradation under high light conditions.

Its subcellular location is the plastid. The protein localises to the chloroplast thylakoid membrane. Its activity is regulated as follows. Inhibited by phenylmethylsulfonyl fluoride and O-phenanthroline. Serine protease that is required at high temperature. May be involved in the degradation of damaged proteins. In vivo, can degrade beta-casein. This is Protease Do-like 1, chloroplastic (DEGP1) from Arabidopsis thaliana (Mouse-ear cress).